The chain runs to 213 residues: Small ribosomal subunit protein uS3c (213 aa).

The KH type-2 domain occupies isoleucine 39–glutamine 109.

Belongs to the universal ribosomal protein uS3 family. Part of the 30S ribosomal subunit.

The protein resides in the plastid. It is found in the chloroplast. The polypeptide is Small ribosomal subunit protein uS3c (rps3) (Mesostigma viride (Green alga)).